A 254-amino-acid polypeptide reads, in one-letter code: UPF0246 protein FTW_0267 (254 aa).

The protein belongs to the UPF0246 family.

The polypeptide is UPF0246 protein FTW_0267 (Francisella tularensis subsp. tularensis (strain WY96-3418)).